The sequence spans 251 residues: Aliphatic sulfonates import ATP-binding protein SsuB (251 aa).

An ABC transporter domain is found at 3-231; sequence VSINEVSKYF…PRNKTSQSFQ (229 aa). ATP is bound at residue 39-46; sequence GPSGCGKS.

This sequence belongs to the ABC transporter superfamily. Aliphatic sulfonates importer (TC 3.A.1.17.2) family. As to quaternary structure, the complex is composed of two ATP-binding proteins (SsuB), two transmembrane proteins (SsuC) and a solute-binding protein (SsuA).

The protein localises to the cell membrane. It catalyses the reaction ATP + H2O + aliphatic sulfonate-[sulfonate-binding protein]Side 1 = ADP + phosphate + aliphatic sulfonateSide 2 + [sulfonate-binding protein]Side 1.. Part of the ABC transporter complex SsuABC involved in aliphatic sulfonates import. Responsible for energy coupling to the transport system. The protein is Aliphatic sulfonates import ATP-binding protein SsuB of Bacillus thuringiensis subsp. konkukian (strain 97-27).